A 131-amino-acid chain; its full sequence is Profilin-4 (131 aa).

This sequence belongs to the profilin family. In terms of assembly, occurs in many kinds of cells as a complex with monomeric actin in a 1:1 ratio.

The protein localises to the cytoplasm. Its subcellular location is the cytoskeleton. Its function is as follows. Binds to actin and affects the structure of the cytoskeleton. At high concentrations, profilin prevents the polymerization of actin, whereas it enhances it at low concentrations. By binding to PIP2, it inhibits the formation of IP3 and DG. The protein is Profilin-4 of Hevea brasiliensis (Para rubber tree).